A 296-amino-acid polypeptide reads, in one-letter code: 4-diphosphocytidyl-2-C-methyl-D-erythritol kinase (296 aa).

The active site involves lysine 13. 104–114 (PMGGGIGGGSS) is a binding site for ATP. The active site involves aspartate 146.

The protein belongs to the GHMP kinase family. IspE subfamily.

The enzyme catalyses 4-CDP-2-C-methyl-D-erythritol + ATP = 4-CDP-2-C-methyl-D-erythritol 2-phosphate + ADP + H(+). It participates in isoprenoid biosynthesis; isopentenyl diphosphate biosynthesis via DXP pathway; isopentenyl diphosphate from 1-deoxy-D-xylulose 5-phosphate: step 3/6. In terms of biological role, catalyzes the phosphorylation of the position 2 hydroxy group of 4-diphosphocytidyl-2C-methyl-D-erythritol. This Hahella chejuensis (strain KCTC 2396) protein is 4-diphosphocytidyl-2-C-methyl-D-erythritol kinase.